We begin with the raw amino-acid sequence, 72 residues long: Conotoxin LiC53 (72 aa).

The N-terminal stretch at M1–G23 is a signal peptide. A propeptide spanning residues G24–A41 is cleaved from the precursor. 3 disulfides stabilise this stretch: C45–C59, C52–C63, and C58–C68.

The protein belongs to the conotoxin O2 superfamily. Expressed by the venom duct.

The protein resides in the secreted. The chain is Conotoxin LiC53 from Conus lividus (Livid cone).